A 64-amino-acid polypeptide reads, in one-letter code: Large ribosomal subunit protein bL35 (64 aa).

Residues 1–26 (MPKMKSHRGASKRFKRTASGKLKRGR) show a composition bias toward basic residues. Disordered regions lie at residues 1 to 28 (MPKM…GRAY) and 33 to 52 (FGNK…MVSS).

It belongs to the bacterial ribosomal protein bL35 family.

This is Large ribosomal subunit protein bL35 from Exiguobacterium sibiricum (strain DSM 17290 / CCUG 55495 / CIP 109462 / JCM 13490 / 255-15).